The primary structure comprises 230 residues: MTQDELKRLVGQAAADYVIQNVPEGAVIGVGTGSTANCFIDALAAVKSRYRGAVSSSVATTERLKSHGIKVFDLNEIESLQVYVDGADEIDASGAMIKGGGGALTREKIVASVADTFVCIADGSKRVPVLGAFPLPIEVVPMARTAIGRRVTALGGVPVLRVTQDGAPYITDNGNEIIDVKGLQIVDPRGFEAQINAWPGVVTVGLFAERGANLCLLGTPNGVETIVYPG.

Residues 32 to 35 (TGST), 85 to 88 (DGAD), and 98 to 101 (KGGG) each bind substrate. The Proton acceptor role is filled by glutamate 107. Residue lysine 125 participates in substrate binding.

The protein belongs to the ribose 5-phosphate isomerase family. As to quaternary structure, homodimer.

The enzyme catalyses aldehydo-D-ribose 5-phosphate = D-ribulose 5-phosphate. It participates in carbohydrate degradation; pentose phosphate pathway; D-ribose 5-phosphate from D-ribulose 5-phosphate (non-oxidative stage): step 1/1. Catalyzes the reversible conversion of ribose-5-phosphate to ribulose 5-phosphate. In Burkholderia ambifaria (strain MC40-6), this protein is Ribose-5-phosphate isomerase A.